The following is a 61-amino-acid chain: Small ribosomal subunit protein uS14 (61 aa).

Zn(2+) contacts are provided by Cys24, Cys27, Cys40, and Cys43.

This sequence belongs to the universal ribosomal protein uS14 family. Zinc-binding uS14 subfamily. In terms of assembly, part of the 30S ribosomal subunit. Contacts proteins S3 and S10. The cofactor is Zn(2+).

Binds 16S rRNA, required for the assembly of 30S particles and may also be responsible for determining the conformation of the 16S rRNA at the A site. The sequence is that of Small ribosomal subunit protein uS14 from Borrelia duttonii (strain Ly).